The sequence spans 156 residues: Arginine repressor (156 aa).

The protein belongs to the ArgR family.

The protein resides in the cytoplasm. It functions in the pathway amino-acid biosynthesis; L-arginine biosynthesis [regulation]. Its function is as follows. Regulates arginine biosynthesis genes. The polypeptide is Arginine repressor (Vibrio cholerae serotype O1 (strain ATCC 39315 / El Tor Inaba N16961)).